A 377-amino-acid polypeptide reads, in one-letter code: F-box protein At4g00755 (377 aa).

In terms of domain architecture, F-box spans 7-47 (LDTDTSLSILSCLDDPSDIVRASAVSRSWRQFVVKYSLSKN).

This chain is F-box protein At4g00755, found in Arabidopsis thaliana (Mouse-ear cress).